We begin with the raw amino-acid sequence, 22 residues long: Alpha-amylase inhibitor DR4 (22 aa).

Residues 1-22 (SGGGKEAAETFNRVESHPRPDA) are disordered.

Inhibits insect alpha-amylases. The polypeptide is Alpha-amylase inhibitor DR4 (Delonix regia (Royal poinciana)).